The chain runs to 483 residues: Cobyric acid synthase (483 aa).

Positions 252-439 (KLKVVVPVLT…LHGFLDSEAV (188 aa)) constitute a GATase cobBQ-type domain. Residue cysteine 333 is the Nucleophile of the active site. Histidine 431 is a catalytic residue.

Belongs to the CobB/CobQ family. CobQ subfamily.

It functions in the pathway cofactor biosynthesis; adenosylcobalamin biosynthesis. Functionally, catalyzes amidations at positions B, D, E, and G on adenosylcobyrinic A,C-diamide. NH(2) groups are provided by glutamine, and one molecule of ATP is hydrogenolyzed for each amidation. The chain is Cobyric acid synthase from Vibrio vulnificus (strain CMCP6).